A 194-amino-acid chain; its full sequence is RNA polymerase II subunit A C-terminal domain phosphatase SSU72 like protein 4 (194 aa).

The protein belongs to the SSU72 phosphatase family.

It is found in the nucleus. The enzyme catalyses O-phospho-L-seryl-[protein] + H2O = L-seryl-[protein] + phosphate. It catalyses the reaction O-phospho-L-threonyl-[protein] + H2O = L-threonyl-[protein] + phosphate. Protein phosphatase that catalyzes the dephosphorylation of the C-terminal domain of RNA polymerase II. Plays a role in RNA processing and termination. The chain is RNA polymerase II subunit A C-terminal domain phosphatase SSU72 like protein 4 from Homo sapiens (Human).